The sequence spans 138 residues: Small ribosomal subunit protein uS11c (138 aa).

Positions 1-24 (MAKSPPRSGSRRPGRIGSRKSGRR) are disordered. The span at 9–24 (GSRRPGRIGSRKSGRR) shows a compositional bias: basic residues.

This sequence belongs to the universal ribosomal protein uS11 family. Part of the 30S ribosomal subunit.

The protein resides in the plastid. The protein localises to the chloroplast. The protein is Small ribosomal subunit protein uS11c of Citrus sinensis (Sweet orange).